We begin with the raw amino-acid sequence, 401 residues long: MYELTPEQRTLQTQARELAQSVFASTAVQTDLTEQYPWDNVAQLRDAGFMGMMLPTSVGGRGLSTLDTVIVIEEMAKACATMGRITVDSNLGAIGAITKYGSEEQIKLAADLVLAGDKPAICISEPNAGSAASEMTTRADKNGDHYILNGEKYWITGGGVSKLHLIFARVFDDGVEQGIGAFITVLDDHGPEGLKVGRRLYAMGVRGIPETHLEFHDLKIHKSMMITFPDGLKRGFAALMSAYNAQRVGAGAVALGIAQCAFEEGVAYLKRREQFGRPLAEFQGLQWMVADMSVQLEAARLMLRSAAVSGETFPDINKAAQAKIFAAETANKVTNDALQFFGSSGYGRHNPMERHVRDARMFTIAGGTAQILRTQVASKILDMKLPQTRDGYLKAAQNSKR.

FAD-binding positions include 121 to 124, serine 130, and 153 to 156; these read ICIS and YWIT. 243 to 244 contributes to the substrate binding site; it reads YN. FAD is bound by residues arginine 272, glutamine 339, serine 343, 366 to 370, and glutamine 387; that span reads GGTAQ.

Belongs to the acyl-CoA dehydrogenase family. In terms of assembly, homotetramer. FAD serves as cofactor.

It catalyses the reaction 3-sulfinopropanoyl-CoA + H2O = propanoyl-CoA + sulfite + H(+). Catalyzes the conversion 3-sulfinopropanoyl-CoA (3SP-CoA) to propanoyl-CoA by abstraction of sulfite. Does not show dehydrogenase activity. Involved in the degradation of 3,3'-dithiodipropionate (DTDP), a sulfur-containing precursor substrate for biosynthesis of polythioesters (PTEs). The polypeptide is 3-sulfinopropanoyl-CoA desulfinase (Advenella mimigardefordensis (strain DSM 17166 / LMG 22922 / DPN7)).